The sequence spans 81 residues: Photosystem I iron-sulfur center (81 aa).

2 consecutive 4Fe-4S ferredoxin-type domains span residues 2 to 31 (SHSV…MVPW) and 39 to 68 (IASS…IRVY). [4Fe-4S] cluster is bound by residues Cys-11, Cys-14, Cys-17, Cys-21, Cys-48, Cys-51, Cys-54, and Cys-58.

In terms of assembly, the G.violaceus PSI reaction center is composed of one copy each of PsaA,B,C,D,E,F,L,M and Z, and forms trimeric complexes. [4Fe-4S] cluster is required as a cofactor.

The protein localises to the cell inner membrane. The catalysed reaction is reduced [plastocyanin] + hnu + oxidized [2Fe-2S]-[ferredoxin] = oxidized [plastocyanin] + reduced [2Fe-2S]-[ferredoxin]. In terms of biological role, apoprotein for the two 4Fe-4S centers FA and FB of photosystem I (PSI); essential for photochemical activity. FB is the terminal electron acceptor of PSI, donating electrons to ferredoxin. The C-terminus interacts with PsaA/B/D and helps assemble the protein into the PSI complex. Required for binding of PsaD and PsaE to PSI. PSI is a plastocyanin/cytochrome c6-ferredoxin oxidoreductase, converting photonic excitation into a charge separation, which transfers an electron from the donor P700 chlorophyll pair to the spectroscopically characterized acceptors A0, A1, FX, FA and FB in turn. The sequence is that of Photosystem I iron-sulfur center from Gloeobacter violaceus (strain ATCC 29082 / PCC 7421).